A 218-amino-acid polypeptide reads, in one-letter code: Small ribosomal subunit protein uS3c (218 aa).

Residues 43–118 (IKNYVQKNTK…KFNIAITKIA (76 aa)) enclose the KH type-2 domain.

Belongs to the universal ribosomal protein uS3 family. As to quaternary structure, part of the 30S ribosomal subunit.

The protein localises to the plastid. It localises to the chloroplast. The sequence is that of Small ribosomal subunit protein uS3c (rps3) from Coffea arabica (Arabian coffee).